The following is an 880-amino-acid chain: Leucine--tRNA ligase (880 aa).

Positions 46–56 (PYPSGALHMGH) match the 'HIGH' region motif. A 'KMSKS' region motif is present at residues 638–642 (KMSKS). Position 641 (Lys641) interacts with ATP.

This sequence belongs to the class-I aminoacyl-tRNA synthetase family.

The protein localises to the cytoplasm. The catalysed reaction is tRNA(Leu) + L-leucine + ATP = L-leucyl-tRNA(Leu) + AMP + diphosphate. The polypeptide is Leucine--tRNA ligase (Xanthomonas axonopodis pv. citri (strain 306)).